Consider the following 96-residue polypeptide: Large ribosomal subunit protein bL27 (96 aa).

A propeptide spanning residues 1–9 is cleaved from the precursor; it reads MLRLDLQFF. Residues 1–36 are disordered; that stretch reads MLRLDLQFFSTKKGQGSSKNGRDSESKRLGSKRADG. The segment covering 8–19 has biased composition (polar residues); the sequence is FFSTKKGQGSSK. Positions 20-35 are enriched in basic and acidic residues; the sequence is NGRDSESKRLGSKRAD.

It belongs to the bacterial ribosomal protein bL27 family. Post-translationally, the N-terminus is cleaved by ribosomal processing cysteine protease Prp.

The polypeptide is Large ribosomal subunit protein bL27 (Oceanobacillus iheyensis (strain DSM 14371 / CIP 107618 / JCM 11309 / KCTC 3954 / HTE831)).